The chain runs to 155 residues: MSVSRRVIHHGLYFAVLGPLIGVLFLVLYIFFAKEPLVLWVIIHPIFLLLSITTGAIPALLTGVMVACLPEKIGSQKRYRCLAGGIGGVVITEIYCAVIVHIKGMASSELFENILSGDSLVVRIIPALLAGVVMSRIITRLPGLDISCPETDSLS.

At 1 to 11 (MSVSRRVIHHG) the chain is on the cytoplasmic side. A helical transmembrane segment spans residues 12–32 (LYFAVLGPLIGVLFLVLYIFF). Residues 33-36 (AKEP) lie on the Periplasmic side of the membrane. The helical transmembrane segment at 37–57 (LVLWVIIHPIFLLLSITTGAI) threads the bilayer. The Cytoplasmic portion of the chain corresponds to 58–81 (PALLTGVMVACLPEKIGSQKRYRC). The chain crosses the membrane as a helical span at residues 82-102 (LAGGIGGVVITEIYCAVIVHI). The Periplasmic portion of the chain corresponds to 103–113 (KGMASSELFEN). A helical transmembrane segment spans residues 114 to 134 (ILSGDSLVVRIIPALLAGVVM). At 135–155 (SRIITRLPGLDISCPETDSLS) the chain is on the cytoplasmic side.

This sequence belongs to the CbrB family.

The protein localises to the cell inner membrane. The chain is Inner membrane protein CbrB (cbrB) from Escherichia coli (strain K12).